The chain runs to 722 residues: Biotin--protein ligase (722 aa).

The segment at Lys-27 to Leu-93 is disordered. Residues Ala-46–Gly-55 are compositionally biased toward low complexity. The residue at position 295 (Ser-295) is a Phosphoserine. The BPL/LPL catalytic domain maps to Thr-459–Gln-648.

This sequence belongs to the biotin--protein ligase family. In terms of assembly, monomer.

The protein localises to the cytoplasm. The protein resides in the mitochondrion. It carries out the reaction apo-[methylmalonyl-CoA:pyruvate carboxytransferase] + biotin + ATP = holo-[methylmalonyl-CoA:pyruvate carboxytransferase] + AMP + diphosphate + H(+). The catalysed reaction is apo-[propionyl-CoA:carbon-dioxide ligase (ADP-forming)] + biotin + ATP = holo-[propionyl-CoA:carbon-dioxide ligase (ADP-forming)] + AMP + diphosphate + H(+). The enzyme catalyses apo-[3-methylcrotonoyl-CoA:carbon-dioxide ligase (ADP-forming)] + biotin + ATP = holo-[3-methylcrotonoyl-CoA:carbon-dioxide ligase (ADP-forming)] + AMP + diphosphate + H(+). It catalyses the reaction biotin + L-lysyl-[protein] + ATP = N(6)-biotinyl-L-lysyl-[protein] + AMP + diphosphate + H(+). Its function is as follows. Biotin--protein ligase catalyzing the biotinylation of the 4 biotin-dependent carboxylases acetyl-CoA-carboxylase, pyruvate carboxylase, propionyl-CoA carboxylase, and methylcrotonyl-CoA carboxylase. This Mus musculus (Mouse) protein is Biotin--protein ligase.